Reading from the N-terminus, the 453-residue chain is UDP-N-acetylmuramoylalanine--D-glutamate ligase (453 aa).

119–125 provides a ligand contact to ATP; the sequence is GSNGKTT.

The protein belongs to the MurCDEF family.

The protein localises to the cytoplasm. It carries out the reaction UDP-N-acetyl-alpha-D-muramoyl-L-alanine + D-glutamate + ATP = UDP-N-acetyl-alpha-D-muramoyl-L-alanyl-D-glutamate + ADP + phosphate + H(+). It functions in the pathway cell wall biogenesis; peptidoglycan biosynthesis. Cell wall formation. Catalyzes the addition of glutamate to the nucleotide precursor UDP-N-acetylmuramoyl-L-alanine (UMA). The chain is UDP-N-acetylmuramoylalanine--D-glutamate ligase from Streptococcus uberis (strain ATCC BAA-854 / 0140J).